Consider the following 440-residue polypeptide: Chromosome partition protein MukF (440 aa).

Positions 208–236 (LSETSGTLRELQDTLEAAGDKLQANLLRI) are leucine-zipper.

This sequence belongs to the MukF family. Interacts, and probably forms a ternary complex, with MukE and MukB via its C-terminal region. The complex formation is stimulated by calcium or magnesium. It is required for an interaction between MukE and MukB.

The protein resides in the cytoplasm. Its subcellular location is the nucleoid. Its function is as follows. Involved in chromosome condensation, segregation and cell cycle progression. May participate in facilitating chromosome segregation by condensation DNA from both sides of a centrally located replisome during cell division. Not required for mini-F plasmid partitioning. Probably acts via its interaction with MukB and MukE. Overexpression results in anucleate cells. It has a calcium binding activity. This chain is Chromosome partition protein MukF, found in Escherichia fergusonii (strain ATCC 35469 / DSM 13698 / CCUG 18766 / IAM 14443 / JCM 21226 / LMG 7866 / NBRC 102419 / NCTC 12128 / CDC 0568-73).